Here is a 448-residue protein sequence, read N- to C-terminus: Probable glycine dehydrogenase (decarboxylating) subunit 1 (448 aa).

It belongs to the GcvP family. N-terminal subunit subfamily. The glycine cleavage system is composed of four proteins: P, T, L and H. In this organism, the P 'protein' is a heterodimer of two subunits.

The enzyme catalyses N(6)-[(R)-lipoyl]-L-lysyl-[glycine-cleavage complex H protein] + glycine + H(+) = N(6)-[(R)-S(8)-aminomethyldihydrolipoyl]-L-lysyl-[glycine-cleavage complex H protein] + CO2. Its function is as follows. The glycine cleavage system catalyzes the degradation of glycine. The P protein binds the alpha-amino group of glycine through its pyridoxal phosphate cofactor; CO(2) is released and the remaining methylamine moiety is then transferred to the lipoamide cofactor of the H protein. This chain is Probable glycine dehydrogenase (decarboxylating) subunit 1, found in Shouchella clausii (strain KSM-K16) (Alkalihalobacillus clausii).